A 270-amino-acid chain; its full sequence is MNVEKLKKMKGKEKIVMVTAYDAPSARIAQDAGIDIILVGDSLGNNVLGYENTIPVTMEEMLIHVAAVRRGAPKAFVVADMPFLSYQPSLEKAIENAGRFLKVGANAVKIEGGEEFGEVVQRLVESGIPVMGHIGLTPQFVNRFGGYRVQGKTEKSREYLLRSARELEKRGAFAIVLEMVVEEVAKEITEGISIPTIGIGSGRFCDGQVLVWHDLLGLNPDFAPRFSKRYANLYETILKALQEFKKEVKEGIFPSEEHVFTDKSQGGVSS.

Positions 41 and 80 each coordinate Mg(2+). Residues 41-42 (DS), D80, and K109 each bind 3-methyl-2-oxobutanoate. Position 111 (E111) interacts with Mg(2+). The active-site Proton acceptor is the E178.

This sequence belongs to the PanB family. As to quaternary structure, homodecamer; pentamer of dimers. The cofactor is Mg(2+).

Its subcellular location is the cytoplasm. The catalysed reaction is 3-methyl-2-oxobutanoate + (6R)-5,10-methylene-5,6,7,8-tetrahydrofolate + H2O = 2-dehydropantoate + (6S)-5,6,7,8-tetrahydrofolate. Its pathway is cofactor biosynthesis; (R)-pantothenate biosynthesis; (R)-pantoate from 3-methyl-2-oxobutanoate: step 1/2. Catalyzes the reversible reaction in which hydroxymethyl group from 5,10-methylenetetrahydrofolate is transferred onto alpha-ketoisovalerate to form ketopantoate. In Thermotoga neapolitana (strain ATCC 49049 / DSM 4359 / NBRC 107923 / NS-E), this protein is 3-methyl-2-oxobutanoate hydroxymethyltransferase.